Consider the following 429-residue polypeptide: Adenylosuccinate synthetase (429 aa).

Residues Gly12–Lys18 and Gly40–Thr42 each bind GTP. Residue Asp13 is the Proton acceptor of the active site. The Mg(2+) site is built by Asp13 and Gly40. IMP-binding positions include Asp13–Lys16, Asn38–His41, Thr128, Arg142, Gln223, Thr238, and Arg302. The active-site Proton donor is His41. Thr298–Arg304 provides a ligand contact to substrate. GTP-binding positions include Arg304, Ser330 to Asp332, and Ser412 to Gly414.

It belongs to the adenylosuccinate synthetase family. As to quaternary structure, homodimer. Mg(2+) is required as a cofactor.

It localises to the cytoplasm. The catalysed reaction is IMP + L-aspartate + GTP = N(6)-(1,2-dicarboxyethyl)-AMP + GDP + phosphate + 2 H(+). It functions in the pathway purine metabolism; AMP biosynthesis via de novo pathway; AMP from IMP: step 1/2. Functionally, plays an important role in the de novo pathway of purine nucleotide biosynthesis. Catalyzes the first committed step in the biosynthesis of AMP from IMP. The chain is Adenylosuccinate synthetase from Bacillus cytotoxicus (strain DSM 22905 / CIP 110041 / 391-98 / NVH 391-98).